A 535-amino-acid chain; its full sequence is Phosphoenolpyruvate carboxykinase (ATP) (535 aa).

Substrate contacts are provided by R59, Y201, and K207. Residues K207, H226, and 243-251 (GLSGTGKTT) contribute to the ATP site. Residues K207 and H226 each coordinate Mn(2+). Position 264 (D264) interacts with Mn(2+). ATP-binding positions include E292, R328, 444-445 (RI), and T450. Substrate is bound at residue R328.

It belongs to the phosphoenolpyruvate carboxykinase (ATP) family. Requires Mn(2+) as cofactor.

The protein resides in the cytoplasm. The catalysed reaction is oxaloacetate + ATP = phosphoenolpyruvate + ADP + CO2. The protein operates within carbohydrate biosynthesis; gluconeogenesis. Functionally, involved in the gluconeogenesis. Catalyzes the conversion of oxaloacetate (OAA) to phosphoenolpyruvate (PEP) through direct phosphoryl transfer between the nucleoside triphosphate and OAA. In Parabacteroides distasonis (strain ATCC 8503 / DSM 20701 / CIP 104284 / JCM 5825 / NCTC 11152), this protein is Phosphoenolpyruvate carboxykinase (ATP).